Reading from the N-terminus, the 331-residue chain is L-lactate dehydrogenase A chain (331 aa).

NAD(+) contacts are provided by residues 29–57 (GMVGMASAISILLKDLCDELAMVDVMEDK) and Arg-98. The substrate site is built by Arg-105, Asn-137, and Arg-168. Position 137 (Asn-137) interacts with NAD(+). Residue His-192 is the Proton acceptor of the active site. Position 247 (Thr-247) interacts with substrate.

This sequence belongs to the LDH/MDH superfamily. LDH family. As to quaternary structure, homotetramer.

It is found in the cytoplasm. It catalyses the reaction (S)-lactate + NAD(+) = pyruvate + NADH + H(+). The protein operates within fermentation; pyruvate fermentation to lactate; (S)-lactate from pyruvate: step 1/1. Its function is as follows. Interconverts simultaneously and stereospecifically pyruvate and lactate with concomitant interconversion of NADH and NAD(+). This is L-lactate dehydrogenase A chain (ldha) from Chaenocephalus aceratus (Blackfin icefish).